The following is a 431-amino-acid chain: 3-phosphoshikimate 1-carboxyvinyltransferase (431 aa).

Lys-22, Ser-23, and Arg-27 together coordinate 3-phosphoshikimate. Residue Lys-22 coordinates phosphoenolpyruvate. Phosphoenolpyruvate contacts are provided by Gly-94 and Arg-122. 3-phosphoshikimate is bound by residues Ser-167, Gln-169, Asp-314, and Lys-341. Gln-169 lines the phosphoenolpyruvate pocket. The active-site Proton acceptor is the Asp-314. Phosphoenolpyruvate is bound by residues Arg-345 and Arg-391.

It belongs to the EPSP synthase family. In terms of assembly, monomer.

It localises to the cytoplasm. The catalysed reaction is 3-phosphoshikimate + phosphoenolpyruvate = 5-O-(1-carboxyvinyl)-3-phosphoshikimate + phosphate. The protein operates within metabolic intermediate biosynthesis; chorismate biosynthesis; chorismate from D-erythrose 4-phosphate and phosphoenolpyruvate: step 6/7. Functionally, catalyzes the transfer of the enolpyruvyl moiety of phosphoenolpyruvate (PEP) to the 5-hydroxyl of shikimate-3-phosphate (S3P) to produce enolpyruvyl shikimate-3-phosphate and inorganic phosphate. This chain is 3-phosphoshikimate 1-carboxyvinyltransferase, found in Leuconostoc citreum (strain KM20).